Reading from the N-terminus, the 347-residue chain is MDLQAQLEELKTKTQEALKQLNGDHSKELQELRVAVLGKKGTLTELLKGLKDLSNDLRPVVGKQVNELRDFLTQAFEEQAKVVEAAKIQAKLDSESIDVTLPGRQMKQGYRHVLTQISEEIEDIFLGMGFQIVDGFEVEKDYYNFERMNLPKDHPARDMQDTFYITEDILLRTHTSPVQARTLDQHDFSKGPLKMISPGRVFRRDTDDATHSHQFHQIEGLVVGKSISMGDLKGTLEMIIKKMFGKERKIRLRPSYFPFTEPSVEVDVSCFKCGGKGCNVCKKTGWIEILGAGMVHPSVLEMSGVNAQEYSGFAFGLGQERIAMLRYGINDIRGFYQGDSRFSKQFK.

A Mg(2+)-binding site is contributed by Glu-261.

It belongs to the class-II aminoacyl-tRNA synthetase family. Phe-tRNA synthetase alpha subunit type 1 subfamily. As to quaternary structure, tetramer of two alpha and two beta subunits. It depends on Mg(2+) as a cofactor.

It localises to the cytoplasm. It carries out the reaction tRNA(Phe) + L-phenylalanine + ATP = L-phenylalanyl-tRNA(Phe) + AMP + diphosphate + H(+). In Streptococcus equi subsp. equi (strain 4047), this protein is Phenylalanine--tRNA ligase alpha subunit.